Here is a 339-residue protein sequence, read N- to C-terminus: FR-33289 synthase (339 aa).

H150, D152, and H288 together coordinate Fe(2+).

This sequence belongs to the TfdA dioxygenase family. As to quaternary structure, homodimer. The cofactor is Fe(2+).

It carries out the reaction 3-(N-acetyl-N-hydroxy)aminopropylphosphonate + 2-oxoglutarate + O2 = (R)-(3-(acetylhydroxyamino)-2-hydroxypropyl)phosphonate + succinate + CO2. It functions in the pathway antibiotic biosynthesis. Functionally, monooxygenase involved in the biosynthesis of the phosphonate antibiotic FR-33289, an antimalarial agent. Catalyzes the oxidative decarboxylation of the antibiotic FR-900098 (3-(N-acetyl-N-hydroxy)aminopropylphosphonate) to form FR-33289 ((R)-(3-(acetylhydroxyamino)-2-hydroxypropyl)phosphonate). The polypeptide is FR-33289 synthase (Streptomyces rubellomurinus (strain ATCC 31215)).